The chain runs to 132 residues: Auxin-responsive protein SAUR72 (132 aa).

The interval 22-54 (SDSQRPSRRSESFLRSSVTRRSKKQTSSVPEGH) is disordered. The segment covering 23–33 (DSQRPSRRSES) has biased composition (basic and acidic residues).

This sequence belongs to the ARG7 family. Interacts with and inhibits PP2C-D subfamily of type 2C phosphatases such as PP2C67/PP2C-D1. Highly expressed in the steles of roots and hypocotyls.

The protein resides in the cytoplasm. In terms of biological role, provide a mechanistic link between auxin and plasma membrane H(+)-ATPases (PM H(+)-ATPases, e.g. AHA1 and AHA2), and triggers PM H(+)-ATPases activity by promoting phosphorylation of their C-terminal autoinhibitory domain as a result of PP2C-D subfamily of type 2C phosphatases inhibition, thus leading to the acidification of the apoplast and the facilitation of solutes and water uptake to drive cell expansion. Plays a role in the regulation of cell expansion, root meristem patterning and auxin transport. The polypeptide is Auxin-responsive protein SAUR72 (Arabidopsis thaliana (Mouse-ear cress)).